Reading from the N-terminus, the 103-residue chain is Small ribosomal subunit protein uS10 (103 aa).

It belongs to the universal ribosomal protein uS10 family. As to quaternary structure, part of the 30S ribosomal subunit.

Functionally, involved in the binding of tRNA to the ribosomes. This chain is Small ribosomal subunit protein uS10, found in Chlorobium luteolum (strain DSM 273 / BCRC 81028 / 2530) (Pelodictyon luteolum).